The following is a 1850-amino-acid chain: Chitin synthase V (1850 aa).

The interval 1-27 is disordered; the sequence is MASTLPPLGGGNGGPHTQHSLPSLPAH. Residues 1-779 form the Myosin motor domain; the sequence is MASTLPPLGG…EIAGLVDGSA (779 aa). 105 to 112 is a binding site for ATP; the sequence is GESGSGKS. Residues N245, N290, N427, N481, and N558 are each glycosylated (N-linked (GlcNAc...) asparagine). A disordered region spans residues 289-309; the sequence is NNTSATGDDSGGFSHEGGQTS. The tract at residues 593-647 is disordered; it reads SKPMRAPSVMSRKGGRGRGIASQRRQQESNLFDSGNTHAESRSPKGGNKGGIDQG. The span at 620–630 shows a compositional bias: polar residues; that stretch reads ESNLFDSGNTH. The segment at 656–680 is actin-binding; the sequence is LDNVQKAVTDPGTNAYFVFCLKPND. 2 helical membrane-spanning segments follow: residues 884–904 and 923–943; these read WVFT…RWIG and MLIW…PMLI. The Cytochrome b5 heme-binding domain maps to 947–1006; that stretch reads QNVFSAAELSSHNGKDGNSAYVSIRGHVIDLGSFADRHYPSFVSRKTMLNYAGMDVSSLF. 3 N-linked (GlcNAc...) asparagine glycosylation sites follow: N1033, N1058, and N1186. The helical transmembrane segment at 1196–1216 threads the bilayer; the sequence is LVLAVSILLVSVIAFKFFAAL. Residues N1453 and N1559 are each glycosylated (N-linked (GlcNAc...) asparagine). 4 consecutive transmembrane segments (helical) span residues 1568 to 1588, 1590 to 1610, 1617 to 1637, and 1644 to 1664; these read LIPM…VVFI, LLST…IVLV, VPIT…IIFI, and MVGW…GLPL. N1767 carries an N-linked (GlcNAc...) asparagine glycan. The DEK-C domain occupies 1800–1850; it reads LPSDDALLAEIRDILKTADLMTVTKKGIKQELERRFDVPLDAKRAYINSGK.

This sequence in the N-terminal section; belongs to the TRAFAC class myosin-kinesin ATPase superfamily. Myosin family. In the C-terminal section; belongs to the chitin synthase family. Class V subfamily. Expressed in conidia and during appressorium formation.

It is found in the cell membrane. Its subcellular location is the cell septum. The protein localises to the cell tip. It catalyses the reaction [(1-&gt;4)-N-acetyl-beta-D-glucosaminyl](n) + UDP-N-acetyl-alpha-D-glucosamine = [(1-&gt;4)-N-acetyl-beta-D-glucosaminyl](n+1) + UDP + H(+). Functionally, polymerizes chitin, a structural polymer of the cell wall and septum, by transferring the sugar moiety of UDP-GlcNAc to the non-reducing end of the growing chitin polymer. Contributes to the production of conidia and the ability of fungal conidia to germinate. Involved in the fungal cell wall integrity and the ability of conidia to withstand biophysical pressure. Required for appressorium formation and evasion of insect cellular and/or humoral defenses, promoting the fungal dimorphic transition to the production of hyphal bodies that occurs within hosts, and ultimately to virulence. The protein is Chitin synthase V of Metarhizium acridum (strain CQMa 102).